Here is a 185-residue protein sequence, read N- to C-terminus: Photosystem I assembly protein Ycf4 (185 aa).

2 consecutive transmembrane segments (helical) span residues 21-43 (NFFWACILFLGSLGFLAVGASSY) and 63-85 (GVVMSFYGIAGLFISSYLWCTIL).

The protein belongs to the Ycf4 family.

It is found in the plastid. The protein localises to the chloroplast thylakoid membrane. Its function is as follows. Seems to be required for the assembly of the photosystem I complex. In Saccharum hybrid (Sugarcane), this protein is Photosystem I assembly protein Ycf4.